A 672-amino-acid chain; its full sequence is MLRNGNKYLLMLVSIIMLTACISQSRTSFIPPQDRESLLAEQPWPHNGFVAISWHNVEDEAADQRFMSVRTSALREQFAWLRENGYQPVSIAQIREAHRGGKPLPEKAVVLTFDDGYQSFYTRVFPILQAFQWPAVWAPVGSWVDTPADKQVKFGDELVDREYFATWQQVREVARSRLVELASHTWNSHYGIQANATGSLLPVYVNRAYFTDHARYETAAEYRERIRLDAVKMTEYLRTKVEVNPHVFVWPYGEANGIAIEELKKLGYDMFFTLESGLANASQLDSIPRVLIANNPSLKEFAQQIITVQEKSPQRIMHIDLDYVYDENLQQMDRNIDVLIQRVKDMQISTVYLQAFADPDGDGLVKEVWFPNRLLPMKADIFSRVAWQLRTRSGVNIYAWMPVLSWDLDPTLTRVKYLPTGEKKAQIHPEQYHRLSPFDDRVRAQVGMLYEDLAGHAAFDGILFHDDALLSDYEDASAPAITAYQQAGFSGSLSEIRQNPEQFKQWARFKSRALTDFTLELSARVKAIRGPHIKTARNIFALPVIQPESEAWFAQNYADFLKSYDWTAIMAMPYLEGVAEKSADQWLIQLTNQIKNIPQAKDKSILELQAQNWQKNGQHQAISSQQLAHWMSLLQLNGVKNYGYYPDNFLHNQPEIDLIRPEFSTAWYPKND.

Positions 1–20 (MLRNGNKYLLMLVSIIMLTA) are cleaved as a signal peptide. C21 carries N-palmitoyl cysteine lipidation. Residue C21 is the site of S-diacylglycerol cysteine attachment. Residues 107–349 (KAVVLTFDDG…IQRVKDMQIS (243 aa)) form the NodB homology domain.

It belongs to the polysaccharide deacetylase family.

It is found in the cell outer membrane. In terms of biological role, catalyzes the N-deacetylation of poly-beta-1,6-N-acetyl-D-glucosamine (PGA), a biofilm adhesin polysaccharide. N-deacetylation promotes PGA export through the PgaA porin. The protein is Poly-beta-1,6-N-acetyl-D-glucosamine N-deacetylase (pgaB) of Escherichia coli (strain K12).